A 469-amino-acid chain; its full sequence is Protein YfjI (469 aa).

The sequence is that of Protein YfjI (yfjI) from Escherichia coli (strain K12).